The primary structure comprises 375 residues: MSTAGKVIKCKAAVLWEPHKPFSIEDIEVAPPKAHEVRIKMVATGVCRSDDHVVSRSLASPLPAVLGHEGAGIVESVGEGVTSVKPGDKVIPLFTPQCGKCRICKHPEYNLCMKNDLMQPRGTLLDGTSRFTCRGKAIHNFISTSTFSQYTVVDEMAVAKIDGASPLEKVCLIGCGFSTGYGSAVKVAKVTPGSTCAVFGLGGVGLSVIIGCKAAGAARIIAVDINKDKFAKAKELGATECINPLDYSKPIQEVLQEMTDGGVDFSFEVIGRLDTMTSSLLSCHASCGVSVIVGVPPNAQSLSVNPMSLLMGRSWKGAIFGGFKSKDSVPKLVTDFMAKKFPLEPLITHVLPFEKINEAFDLLRAGKSIRTVLTF.

An N-acetylserine modification is found at Ser2. 7 residues coordinate Zn(2+): Cys47, His68, Cys98, Cys101, Cys104, Cys112, and Cys175. NAD(+) is bound by residues 200–205, Asp224, and Lys229; that span reads GLGGVG. Lys234 is subject to N6-succinyllysine. 293-295 is a binding site for NAD(+); sequence VGV. Lys340 bears the N6-succinyllysine mark. Arg370 lines the NAD(+) pocket.

The protein belongs to the zinc-containing alcohol dehydrogenase family. Class-I subfamily. It depends on Zn(2+) as a cofactor.

It localises to the cytoplasm. It catalyses the reaction a primary alcohol + NAD(+) = an aldehyde + NADH + H(+). The catalysed reaction is a secondary alcohol + NAD(+) = a ketone + NADH + H(+). This chain is Alcohol dehydrogenase 1 (ADH1), found in Peromyscus maniculatus (North American deer mouse).